Consider the following 195-residue polypeptide: BH3-interacting domain death agonist (195 aa).

Methionine 1 is modified (N-acetylmethionine). Residues 58-69 (TDGSQASRSFNQ) are compositionally biased toward polar residues. The disordered stretch occupies residues 58–77 (TDGSQASRSFNQGRIEPDSE). Position 78 is a phosphoserine (serine 78). The BH3 signature appears at 87–100 (ARHLAQIGDEMDHN).

As to quaternary structure, forms heterodimers either with the pro-apoptotic protein BAX or the anti-apoptotic protein BCL2. Interacts with PLEKHN1. In terms of assembly, interacts with ITCH. Interacts with MTCH2. In terms of processing, TNF-alpha induces caspase-mediated cleavage into a major p15 and minor p13 and p11 products. Cleaved by CASP6 into a major p15 and minor p13 products, leading to release of cytochrome c and subsequent nonalcoholic steatohepatitis. Post-translationally, ubiquitinated by ITCH; ubiquitination results in proteasome-dependent degradation.

The protein localises to the cytoplasm. It localises to the mitochondrion membrane. It is found in the mitochondrion outer membrane. Induces caspases and apoptosis. Counters the protective effect of BCL2. Functionally, induces caspase activation and apoptosis. Allows the release of cytochrome c. This is BH3-interacting domain death agonist (Bid) from Mus musculus (Mouse).